The sequence spans 202 residues: Nudix hydrolase 13, mitochondrial (202 aa).

The Nudix hydrolase domain occupies 18-167 (NFRLVSGCIP…WMQSALEEFL (150 aa)). The Nudix box motif lies at 65-86 (GGWEDDETVLEAASREAMEEAG). Mg(2+)-binding residues include glutamate 80 and glutamate 84.

The protein belongs to the Nudix hydrolase family. In terms of assembly, monomer. Mg(2+) serves as cofactor. As to expression, expressed in roots, leaves, stems and inflorescences.

The protein resides in the mitochondrion. Its activity is regulated as follows. Inhibited by fluoride. Its function is as follows. Mediates the hydrolysis of some nucleoside diphosphate derivatives. Can use diadenosine 5',5'''-P(1)P(6) hexaphosphate (Ap(6)A), diadenosine 5',5'''-P(1)P(5) pentaphosphate (Ap(5)A) and adenosine tetraphosphate (p(4)A) as substrates, but not diadenosine 5',5'''-P(1)P(4) tetraphosphate (Ap(4)A), diadenosine 5',5'''-P(1)P(3) triphosphate (Ap(3)A), deoxyribonucleoside triphosphates, ribonucleoside triphosphates, diphosphoinositol pentakisphosphate (PP-InsP(5)) and 5-phospho-alpha-D-ribosyl diphosphate (PRPP). The polypeptide is Nudix hydrolase 13, mitochondrial (NUDT13) (Arabidopsis thaliana (Mouse-ear cress)).